Consider the following 78-residue polypeptide: Probable [Fe-S]-dependent transcriptional repressor (78 aa).

4 residues coordinate iron-sulfur cluster: cysteine 56, cysteine 61, cysteine 64, and cysteine 70.

It belongs to the FeoC family.

May function as a transcriptional regulator that controls feoABC expression. The sequence is that of Probable [Fe-S]-dependent transcriptional repressor from Cronobacter sakazakii (strain ATCC BAA-894) (Enterobacter sakazakii).